A 364-amino-acid chain; its full sequence is Transposase for insertion sequence element IS1111A (364 aa).

The protein belongs to the transposase IS1111A/IS1328/IS1533 family.

Its function is as follows. Required for the transposition of the insertion element. The chain is Transposase for insertion sequence element IS1111A from Coxiella burnetii (strain RSA 493 / Nine Mile phase I).